The primary structure comprises 811 residues: Potassium transporter 27 (811 aa).

Over 1-64 the chain is Cytoplasmic; that stretch reads MGDDVLGRGS…QEESWARTLK (64 aa). Residues 65 to 85 form a helical membrane-spanning segment; that stretch reads LAFQCVGILYGDIGTSPLFVY. Topologically, residues 86-102 are extracellular; the sequence is SSTFKDGVRHPDDLLGA. A helical membrane pass occupies residues 103–123; that stretch reads LSLIIYSFALFTIVKYVFIAL. The Cytoplasmic segment spans residues 124–188; it reads RANDDGDGGT…ELLETNRAVK (65 aa). Residues 189–209 form a helical membrane-spanning segment; sequence IWLFLLTILATAMVISDAVLT. The Extracellular portion of the chain corresponds to 210–226; the sequence is PAISVLSAVGGLKEKAP. A helical transmembrane segment spans residues 227–247; it reads NLTTDEIVWITVATLVVLFAI. Over 248 to 254 the chain is Cytoplasmic; that stretch reads QRFGTDK. A helical membrane pass occupies residues 255 to 275; that stretch reads IGYLFAPIILLWLLLIGCVGI. The Extracellular portion of the chain corresponds to 276 to 310; sequence YNTIKFDTGVLRAFNLKYIIDYFRRNKKDGWISLS. Residues 311–331 form a helical membrane-spanning segment; the sequence is GILLCFTGTEALFSDLGYFSI. At 332 to 335 the chain is on the cytoplasmic side; that stretch reads RSIQ. A helical membrane pass occupies residues 336-356; sequence LSFSFGLVPSVLLAYIGQAAY. The Extracellular portion of the chain corresponds to 357-375; sequence LREHPEHIANTFYRSTPNV. A helical transmembrane segment spans residues 376–396; it reads MFWPTFILAVAASIIGSQAMI. Residues 397–434 lie on the Cytoplasmic side of the membrane; the sequence is SCAFATISHLQTLNCFPRVKILHTSRQYSGQLYIPEVN. The chain crosses the membrane as a helical span at residues 435-455; that stretch reads FLLCVGACLVTIGFKTTVIIG. At 456–459 the chain is on the extracellular side; the sequence is EAHA. Residues 460–480 traverse the membrane as a helical segment; that stretch reads ICVVFVMIITTLLLTIVMLLV. Over 481–482 the chain is Cytoplasmic; it reads WK. Residues 483-503 form a helical membrane-spanning segment; that stretch reads VSIWYVALFFIVFMSSESIYL. Residues 504 to 515 lie on the Extracellular side of the membrane; the sequence is SAVLYQFVHGEY. A helical membrane pass occupies residues 516 to 536; that stretch reads VPVAMSVFLMIVMTVWHYVHV. The Cytoplasmic segment spans residues 537–811; that stretch reads KRYEFELEHT…VLKVGIAYEI (275 aa).

This sequence belongs to the HAK/KUP transporter (TC 2.A.72.3) family.

The protein resides in the membrane. Its function is as follows. High-affinity potassium transporter. This Oryza sativa subsp. japonica (Rice) protein is Potassium transporter 27 (HAK27).